A 134-amino-acid polypeptide reads, in one-letter code: Profilin-3 (134 aa).

Cys13 and Cys118 are oxidised to a cystine. An Involved in PIP2 interaction motif is present at residues 84-100 (AVIRGKKGSGGITIKKT). Position 114 is a phosphothreonine (Thr114).

It belongs to the profilin family. As to quaternary structure, occurs in many kinds of cells as a complex with monomeric actin in a 1:1 ratio. In terms of processing, phosphorylated by MAP kinases.

The protein resides in the cytoplasm. Its subcellular location is the cytoskeleton. In terms of biological role, binds to actin and affects the structure of the cytoskeleton. At high concentrations, profilin prevents the polymerization of actin, whereas it enhances it at low concentrations. This is Profilin-3 from Olea europaea (Common olive).